The following is a 240-amino-acid chain: UDP-2,3-diacylglucosamine hydrolase (240 aa).

Residues aspartate 9, histidine 11, aspartate 43, asparagine 81, and histidine 116 each contribute to the Mn(2+) site. 81-82 (NR) contacts substrate. Substrate-binding residues include aspartate 124, serine 162, lysine 166, lysine 169, and histidine 197. Histidine 197 and histidine 199 together coordinate Mn(2+).

This sequence belongs to the LpxH family. Mn(2+) is required as a cofactor.

It localises to the cell inner membrane. The catalysed reaction is UDP-2-N,3-O-bis[(3R)-3-hydroxytetradecanoyl]-alpha-D-glucosamine + H2O = 2-N,3-O-bis[(3R)-3-hydroxytetradecanoyl]-alpha-D-glucosaminyl 1-phosphate + UMP + 2 H(+). Its pathway is glycolipid biosynthesis; lipid IV(A) biosynthesis; lipid IV(A) from (3R)-3-hydroxytetradecanoyl-[acyl-carrier-protein] and UDP-N-acetyl-alpha-D-glucosamine: step 4/6. In terms of biological role, hydrolyzes the pyrophosphate bond of UDP-2,3-diacylglucosamine to yield 2,3-diacylglucosamine 1-phosphate (lipid X) and UMP by catalyzing the attack of water at the alpha-P atom. Involved in the biosynthesis of lipid A, a phosphorylated glycolipid that anchors the lipopolysaccharide to the outer membrane of the cell. The polypeptide is UDP-2,3-diacylglucosamine hydrolase (Neisseria meningitidis serogroup A / serotype 4A (strain DSM 15465 / Z2491)).